The sequence spans 377 residues: Mitogen-activated protein kinase pmk-1 (377 aa).

The 285-residue stretch at Y35–L319 folds into the Protein kinase domain. Residues I41–V49 and K64 each bind ATP. The active-site Proton acceptor is D179. Phosphothreonine is present on T191. The TXY signature appears at T191 to Y193. Y193 is modified (phosphotyrosine).

Belongs to the protein kinase superfamily. CMGC Ser/Thr protein kinase family. MAP kinase subfamily. Interacts with transcription factor atf-7; perhaps in a manner dependent on dual specificity protein kinase sek-1. Mg(2+) serves as cofactor. It depends on Mn(2+) as a cofactor. Dually phosphorylated on Thr-191 and Tyr-193, probably by sek-1, which activates the enzyme. Increased phosphorylation in response to the heavy metal arsenite. Increased phosphorylation in response to intestinal colonization by probiotic Lactobacillus fermentum strain JDFM216. Expressed in intestinal cells.

The protein resides in the nucleus. It carries out the reaction L-seryl-[protein] + ATP = O-phospho-L-seryl-[protein] + ADP + H(+). The enzyme catalyses L-threonyl-[protein] + ATP = O-phospho-L-threonyl-[protein] + ADP + H(+). Activated by phosphorylation on threonine and tyrosine. Inhibited by pyridinyl-imidazole related compounds. Functionally, serine/threonine kinase which responds to activation by environmental stress and pro-inflammatory cytokines by phosphorylating downstream targets. As part of a MAP kinase signaling pathway, plays a role in modulation of lifespan and immunity. Phosphorylates skn-1 which probably regulates skn-1 nuclear translocation in response to oxidative stress. Probably by activating skn-1, involved in the up-regulation of gcs-1 and glutathione-S-transferase gst-4 expression upon bacteria infection. Up-regulates expression of gcs-1 in intestinal cells upon arsenite treatment. Functions downstream of the MAPKK sek-1 and the MAPKKK nsy-1 as the MAP kinase which regulates pathogen resistance and responses to oxidative stress. Required for expression of antimicrobial peptide nlp-29 in response to fungal infection or physical injury. Involved in resistance to the nematotoxic C.cinerea galectin (Cgl2). May play a redundant role with other MAP kinases in susceptibility to anoxia, downstream of tir-1/nsy-1. Phosphorylates transcription factor rnt-1 during oxidative stress which results in rnt-1 stabilization in the intestine. Phosphorylates transcription factor atf-7 during pathogen infection resulting in modulation of target genes. Probably downstream of nsy-1 and sek-1, involved in germline apoptosis induced by heavy metals, such as Cu(2+). Regulates the basal expression of immune effector genes including irg-4, irg-5, mul-1 and drd-50. The sequence is that of Mitogen-activated protein kinase pmk-1 from Caenorhabditis elegans.